We begin with the raw amino-acid sequence, 326 residues long: MSLGLQCLAAVLFSALFSLGVILVHLPWRALKSKDPRERILGSPKELVPTCPYEYIRNIYGRHHWAPFVAKLAPNLKESDSDRYTMVLEIMDCIHLCLIMVDDITDDSDYRKGRPAAHIIYGRSETANRAYLRVSQIINKTTQDFPRLAPWVTQSLAEILEGQDISLVWRRDGLTSFPKAHDERVIAYRCMSSLKTGALFRLLGRLVLENRSMDDTLSQVGYYSQLQNDCKNVFSSEYAKAKGTLAEDLRNRELTYPIILALNEPEGFYIEKAFESGSPRDIQNAIGVIQSENVYRACLDELKQYESNVREWVTLWGRKEKLDLTH.

Residues 8 to 28 (LAAVLFSALFSLGVILVHLPW) traverse the membrane as a helical segment. His95 provides a ligand contact to isopentenyl diphosphate. Mg(2+) contacts are provided by Asp102 and Asp106. Arg111 provides a ligand contact to dimethylallyl diphosphate. N-linked (GlcNAc...) asparagine glycosylation is present at Asn139. Lys195 contributes to the dimethylallyl diphosphate binding site. Residue Asn210 is glycosylated (N-linked (GlcNAc...) asparagine).

The protein belongs to the FPP/GGPP synthase family.

Its subcellular location is the membrane. It participates in secondary metabolite biosynthesis. Its function is as follows. Cytochrome P450 monooxygenase; part of the gene cluster that mediates the biosynthesis of the indole diterpenes nodulisporic acids (NA). Nodulisporic acid A (NAA) and its chemically modified derivatives are of particular significance because of their highly potent insecticidal activity against blood-feeding arthropods and lack of observable adverse effects on mammals, in particular the tremogenicity associated with the paspaline-derived IDTs is not observed. The geranylgeranyl diphosphate (GGPP) synthase ggs1, localized outside of the cluster, is proposed to catalyze the first step in nodulisporic acid biosynthesis via conversion of farnesyl pyrophosphate and isopentyl pyrophosphate into geranylgeranyl pyrophosphate (GGPP). Condensation of indole-3-glycerol phosphate with GGPP by the prenyl transferase nodC then forms 3-geranylgeranylindole (3-GGI). Epoxidation by the FAD-dependent monooxygenase nodM leads to a single-epoxidized-GGI that is substrate of the terpene cyclase nodB for cyclization to yield emindole SB. The terminal methyl carbon, C28, of emindole SB is then oxidized by the cytochrome P450 monooxygenase nodW to produce nodulisporic acid F (NAF), the pentacyclic core of NAA. NAF is converted to nodulisporic acid E (NAE) via prenylation. This step is probably performed by one of the indole diterpene prenyltransferases nodD1 or nodD2. Several oxidation steps performed by the FAD-linked oxidoreductase nodO and one of the cytochrome P450 monooxygenase nodR, nodX or nodZ further convert NAE to nodulisporic acid D (NAD). NAD is substrate of cytochrome P450 monooxygenase nodJ to produce the precursor of nodulisporic acid C (NAC), converted to NAC by one of the indole diterpene prenyltransferases nodD1 or nodD2. The FAD-dependent monooxygenase nodY2 then oxidizes NAC to nodulisporic acid B (NAB). Finally NAB is converted to NAA by one of the cytochrome P450 monooxygenases nodR, nodX or nodZ. The sequence is that of Prenyl transferase nodC from Hypoxylon pulicicidum.